A 427-amino-acid polypeptide reads, in one-letter code: Histidine--tRNA ligase (427 aa).

It belongs to the class-II aminoacyl-tRNA synthetase family. Homodimer.

The protein resides in the cytoplasm. The catalysed reaction is tRNA(His) + L-histidine + ATP = L-histidyl-tRNA(His) + AMP + diphosphate + H(+). In Corynebacterium urealyticum (strain ATCC 43042 / DSM 7109), this protein is Histidine--tRNA ligase.